Here is a 357-residue protein sequence, read N- to C-terminus: Probable leucine aminopeptidase TRV_02148.1 (357 aa).

The signal sequence occupies residues 1–15 (MKVLAALALSALAMA). Residue Asn-76 is glycosylated (N-linked (GlcNAc...) asparagine). Zn(2+) is bound by residues His-167 and Asp-185. Positions 169-188 (DSINGKNPQGEAPGADDNGS) are disordered. N-linked (GlcNAc...) asparagine glycosylation is present at Asn-186. The Zn(2+) site is built by Glu-224 and Asp-251. A glycan (N-linked (GlcNAc...) asparagine) is linked at Asn-269. The cysteines at positions 291 and 295 are disulfide-linked. Zn(2+) is bound at residue His-324.

The protein belongs to the peptidase M28 family. M28E subfamily. Monomer. Zn(2+) is required as a cofactor.

The protein resides in the secreted. Its function is as follows. Probable extracellular aminopeptidase which contributes to pathogenicity. This chain is Probable leucine aminopeptidase TRV_02148.1, found in Trichophyton verrucosum (strain HKI 0517).